Here is a 77-residue protein sequence, read N- to C-terminus: Acyl carrier protein (77 aa).

The region spanning 2–77 (SDIAARVKKI…DATKFISEAQ (76 aa)) is the Carrier domain. Serine 37 is modified (O-(pantetheine 4'-phosphoryl)serine).

It belongs to the acyl carrier protein (ACP) family. Post-translationally, 4'-phosphopantetheine is transferred from CoA to a specific serine of apo-ACP by AcpS. This modification is essential for activity because fatty acids are bound in thioester linkage to the sulfhydryl of the prosthetic group.

The protein localises to the cytoplasm. The protein operates within lipid metabolism; fatty acid biosynthesis. Carrier of the growing fatty acid chain in fatty acid biosynthesis. This is Acyl carrier protein from Jannaschia sp. (strain CCS1).